A 284-amino-acid chain; its full sequence is ATP synthase subunit a (284 aa).

The next 5 helical transmembrane spans lie at 47 to 67, 108 to 128, 156 to 176, 233 to 253, and 254 to 274; these read AFHL…LIFF, VAPL…MDLV, VPTA…ILII, MIFI…SLPW, and AIFH…LVIV.

The protein belongs to the ATPase A chain family. As to quaternary structure, F-type ATPases have 2 components, CF(1) - the catalytic core - and CF(0) - the membrane proton channel. CF(1) has five subunits: alpha(3), beta(3), gamma(1), delta(1), epsilon(1). CF(0) has three main subunits: a(1), b(2) and c(9-12). The alpha and beta chains form an alternating ring which encloses part of the gamma chain. CF(1) is attached to CF(0) by a central stalk formed by the gamma and epsilon chains, while a peripheral stalk is formed by the delta and b chains.

It localises to the cell inner membrane. In terms of biological role, key component of the proton channel; it plays a direct role in the translocation of protons across the membrane. This is ATP synthase subunit a from Ruthia magnifica subsp. Calyptogena magnifica.